Here is a 267-residue protein sequence, read N- to C-terminus: 3-deoxy-manno-octulosonate cytidylyltransferase 2 (267 aa).

It belongs to the KdsB family.

It is found in the cytoplasm. The enzyme catalyses 3-deoxy-alpha-D-manno-oct-2-ulosonate + CTP = CMP-3-deoxy-beta-D-manno-octulosonate + diphosphate. It participates in nucleotide-sugar biosynthesis; CMP-3-deoxy-D-manno-octulosonate biosynthesis; CMP-3-deoxy-D-manno-octulosonate from 3-deoxy-D-manno-octulosonate and CTP: step 1/1. Its pathway is bacterial outer membrane biogenesis; lipopolysaccharide biosynthesis. Functionally, activates KDO (a required 8-carbon sugar) for incorporation into bacterial lipopolysaccharide in Gram-negative bacteria. This is 3-deoxy-manno-octulosonate cytidylyltransferase 2 from Burkholderia ambifaria (strain MC40-6).